Consider the following 498-residue polypeptide: POTE ankyrin domain family member A (498 aa).

5 ANK repeats span residues 98–127 (KKRT…QLHV), 131–160 (KKRT…DPNL), 164–193 (YGNT…DIES), 197–226 (GGLT…NLNA), and 230–259 (FGRT…DVFS). A disordered region spans residues 289 to 410 (NQMPNNSSGN…SNEKNKVKSQ (122 aa)). Over residues 290–302 (QMPNNSSGNSNPE) the composition is skewed to polar residues. Over residues 303 to 338 (QDLKLTSEEEPQRLKGSENSQHEKVTQEPDINKDCD) the composition is skewed to basic and acidic residues. A compositionally biased stretch (polar residues) spans 348–359 (HGSNNVGLSENL). Residues 392–406 (EEYHRPEKKSNEKNK) are compositionally biased toward basic and acidic residues. Residues 469-497 (EHLLELKNSHYEQLTVEVEQMENMVHVLQ) are a coiled coil.

This sequence belongs to the POTE family.

This chain is POTE ankyrin domain family member A (POTEA), found in Homo sapiens (Human).